The chain runs to 164 residues: UPF0304 protein MS2240 (164 aa).

The protein belongs to the UPF0304 family.

The polypeptide is UPF0304 protein MS2240 (Mannheimia succiniciproducens (strain KCTC 0769BP / MBEL55E)).